The following is a 713-amino-acid chain: MSDTTLSEATSNTASHSLAEKRKILVTCALPYANGSIHLGHMLEHIQTDIWVRFQRMRGHETYFVCADDAHGTPIMLKAQELGITPEEMINGVREERIKEFSDFHISFDNYHTTHSDENKEYSEKIYNALHAKGHIKTRIISQLYDPEKGMFLADRFVKGTCPKCKSEDENGDSCDNCGATYSPTEVLNPRSAISGATPILKDSEHYFFDLPAFETMLSDWIRSGALQEEVANKLTEWFEQGLKQWDISRDAPYFGFEIPNAPGKFFYVWLDAPIGYMGSFKNLCDKDSTIDFDSFWNKNSDAELYHFIGKDIINFHSLFWPAMLEGADFRKPTAVFAHGFVTVNGEKMSKSKGTFIKGRTYLDHLNPEYLRYYYATKLTHKIDDLDLNLEDFVQRVNSDLVGKVVNIASRCASFITKRFDGMLSTNIDDQALADEVMAAGDSIAAHYESRDFGRGMREIMALADKVNEYIAIKEPWQLVKDETKQQEVQDICSLGINMFRTLMIYLKPVLPVLADSTAAFLNDELVWEGHKTLLTDHKINKFKALLQRVDMDKVNAMTDASKDSLGAPVEEEKKPAKKKKAAKVVDNSAALADPLAADPISEEIEFDDFAKIDLRIVKIINAEHVEKADKLIQLTLALNEEGTETRQVFAGIKSAYNPEDLIGKHTVMVANLAPRKMRFGMSEGMVLAAGPGDKDLWILNPDDGAKAGMRVK.

The 'HIGH' region signature appears at 31 to 41; the sequence is PYANGSIHLGH. Positions 162, 165, 175, and 178 each coordinate Zn(2+). A 'KMSKS' region motif is present at residues 348–352; it reads KMSKS. An ATP-binding site is contributed by K351. A tRNA-binding domain is found at 609–713; the sequence is DFAKIDLRIV…DGAKAGMRVK (105 aa).

It belongs to the class-I aminoacyl-tRNA synthetase family. MetG type 1 subfamily. In terms of assembly, homodimer. Requires Zn(2+) as cofactor.

It is found in the cytoplasm. The enzyme catalyses tRNA(Met) + L-methionine + ATP = L-methionyl-tRNA(Met) + AMP + diphosphate. Functionally, is required not only for elongation of protein synthesis but also for the initiation of all mRNA translation through initiator tRNA(fMet) aminoacylation. The chain is Methionine--tRNA ligase from Colwellia psychrerythraea (strain 34H / ATCC BAA-681) (Vibrio psychroerythus).